A 1118-amino-acid polypeptide reads, in one-letter code: Protein argonaute 1B (1118 aa).

Disordered stretches follow at residues 1–175 and 188–246; these read MALQ…SRTV and APMV…RFPL. Positions 10–24 are enriched in basic residues; the sequence is PHHHQVPIMVKKKRT. Low complexity predominate over residues 25 to 35; the sequence is GSGSTGESSGE. 3 stretches are compositionally biased toward gly residues: residues 54–92, 100–110, and 118–128; these read QHGG…HHPG, GRGGPGSHHPG, and GRGGSGSHHPG. Low complexity-rich tracts occupy residues 148 to 157 and 193 to 219; these read RGGMPQPYYG and PTPS…QFQQ. Positions 220–241 are enriched in polar residues; that stretch reads LATRDQSSTSQAIQIAPPSSKS. The 114-residue stretch at 457–570 folds into the PAZ domain; it reads PVIDFVAQLL…LPMEVCKIVE (114 aa). Residues 746–1067 form the Piwi domain; that stretch reads LLIVILPDNN…AAFRARFYME (322 aa).

It belongs to the argonaute family. Ago subfamily.

Its function is as follows. Probably involved in the RNA silencing pathway. May bind to short RNAs such as microRNAs (miRNAs) or short interfering RNAs (siRNAs), and represses the translation of mRNAs which are complementary to them. This chain is Protein argonaute 1B (AGO1B), found in Oryza sativa subsp. japonica (Rice).